A 251-amino-acid chain; its full sequence is Hydroxyacylglutathione hydrolase (251 aa).

7 residues coordinate Zn(2+): His53, His55, Asp57, His58, His110, Asp127, and His165.

It belongs to the metallo-beta-lactamase superfamily. Glyoxalase II family. Monomer. The cofactor is Zn(2+).

The catalysed reaction is an S-(2-hydroxyacyl)glutathione + H2O = a 2-hydroxy carboxylate + glutathione + H(+). It participates in secondary metabolite metabolism; methylglyoxal degradation; (R)-lactate from methylglyoxal: step 2/2. Its function is as follows. Thiolesterase that catalyzes the hydrolysis of S-D-lactoyl-glutathione to form glutathione and D-lactic acid. This Salmonella agona (strain SL483) protein is Hydroxyacylglutathione hydrolase.